Reading from the N-terminus, the 514-residue chain is FAD-dependent monooxygenase CPUR_05423 (514 aa).

The FAD site is built by valine 79 and arginine 146. Arginine 227 is a catalytic residue. Residues aspartate 358 and glycine 371 each contribute to the FAD site.

This sequence belongs to the paxM FAD-dependent monooxygenase family. The cofactor is FAD.

Its pathway is pigment biosynthesis. FAD-dependent monooxygenase; part of the ergochrome gene cluster responsible for the typical purple-black color of the ergot sclerotia. The ergochrome gene cluster produces several ergot pigments including the yellow ergochrome secalonic acid and its derivatives, as well as the red anthraquinones endocrocin and clavorubin. The pathway begins with the synthesis of atrochrysone thioester by the polyketide synthase (PKS) CPUR_05437. The atrochrysone carboxyl ACP thioesterase CPUR_05436 then breaks the thioester bond and releases the atrochrysone carboxylic acid from CPUR_05437. The atrochrysone carboxylic acid is then converted to atrochrysone which is further transformed into emodin anthrone. The next step is performed by the anthrone oxygenase CPUR_05434 that catalyzes the oxidation of emodinanthrone to emodin. Emodin is further modified to yield monodictyphenone via several steps involving CPUR_05427, CPUR_05428, CPUR_05429 and CPUR_05430. The short chain dehydrogenase/reductase CPUR_05418 then catalyzes the C-5 ketoreduction to give the xanthone skeleton of the monomeric units. Ergochromes formation requires further dimerization steps of different xanthone units, probably catalyzed by the cytochrome P450 monooxygenase CPUR_05419. CPUR_05425, CPUR_05426 and CPUR_05431 are unique to Claviceps, thus it is likely that they are involved in further modification of xanthone units or in their dimerization. The yellow ergochromes and the red anthraquinone pigments endocrocin and clavorubin are products from the same PKS derived precursors and the latter are likely shunt products in the pathway of xanthone biosynthesis. It is proposed that atrochrysone carboxylic acid released from the PKS CPUR_05437 can also be converted to endocrocin anthrone which is further oxidized into endocrocin by CPUR_05435. Endocrocin could be then modified to clavorubin, possibly by CPUR_05423 and CPUR_05431. Clavorubin is the principal anthraquinone metabolite produced by the cluster with a much higher yield compared to endocrocin. The protein is FAD-dependent monooxygenase CPUR_05423 of Claviceps purpurea (strain 20.1) (Ergot fungus).